Reading from the N-terminus, the 257-residue chain is Flagellar brake protein YcgR 1 (257 aa).

A compositionally biased stretch (polar residues) spans 1–18 (MDTTQSNGQTDTQGQLHA). Residues 1–30 (MDTTQSNGQTDTQGQLHAQTAEGGNDFGRR) form a disordered region. Residues 133-246 (QRREYFRVDA…AENTLQRLIT (114 aa)) form the PilZ domain.

Belongs to the YcgR family. Monomer. Interacts with the flagellar basal bodies.

Its subcellular location is the bacterial flagellum basal body. Acts as a flagellar brake, regulating swimming and swarming in a bis-(3'-5') cyclic diguanylic acid (c-di-GMP)-dependent manner. Binds 1 c-di-GMP dimer per subunit. Increasing levels of c-di-GMP lead to decreased motility. In Paraburkholderia phytofirmans (strain DSM 17436 / LMG 22146 / PsJN) (Burkholderia phytofirmans), this protein is Flagellar brake protein YcgR 1.